We begin with the raw amino-acid sequence, 242 residues long: Beta-carotene ketolase (242 aa).

The catalysed reaction is all-trans-beta-carotene + 2 AH2 + 2 O2 = echinenone + 2 A + 3 H2O. It catalyses the reaction echinenone + 2 AH2 + 2 O2 = canthaxanthin + 2 A + 3 H2O. Its pathway is carotenoid biosynthesis; astaxanthin biosynthesis. Its function is as follows. Converts beta-carotene to canthaxanthin via echinenone. The sequence is that of Beta-carotene ketolase (crtW) from Paracoccus sp. (strain N81106 / MBIC 01143) (Agrobacterium aurantiacum).